Here is a 162-residue protein sequence, read N- to C-terminus: tRNA (cytidine(34)-2'-O)-methyltransferase (162 aa).

Positions 80, 102, 124, and 132 each coordinate S-adenosyl-L-methionine.

It belongs to the class IV-like SAM-binding methyltransferase superfamily. RNA methyltransferase TrmH family. TrmL subfamily. In terms of assembly, homodimer.

The protein localises to the cytoplasm. It catalyses the reaction cytidine(34) in tRNA + S-adenosyl-L-methionine = 2'-O-methylcytidine(34) in tRNA + S-adenosyl-L-homocysteine + H(+). It carries out the reaction 5-carboxymethylaminomethyluridine(34) in tRNA(Leu) + S-adenosyl-L-methionine = 5-carboxymethylaminomethyl-2'-O-methyluridine(34) in tRNA(Leu) + S-adenosyl-L-homocysteine + H(+). Functionally, methylates the ribose at the nucleotide 34 wobble position in the two leucyl isoacceptors tRNA(Leu)(CmAA) and tRNA(Leu)(cmnm5UmAA). Catalyzes the methyl transfer from S-adenosyl-L-methionine to the 2'-OH of the wobble nucleotide. The sequence is that of tRNA (cytidine(34)-2'-O)-methyltransferase from Acidovorax sp. (strain JS42).